The primary structure comprises 157 residues: 2-C-methyl-D-erythritol 2,4-cyclodiphosphate synthase (157 aa).

A divalent metal cation is bound by residues D8, H10, and H42. D8–H10 contributes to the 4-CDP-2-C-methyl-D-erythritol 2-phosphate binding site. Residues D56–G58, S132–E135, F139, and R142 each bind 4-CDP-2-C-methyl-D-erythritol 2-phosphate.

This sequence belongs to the IspF family. As to quaternary structure, homotrimer. It depends on a divalent metal cation as a cofactor.

The catalysed reaction is 4-CDP-2-C-methyl-D-erythritol 2-phosphate = 2-C-methyl-D-erythritol 2,4-cyclic diphosphate + CMP. Its pathway is isoprenoid biosynthesis; isopentenyl diphosphate biosynthesis via DXP pathway; isopentenyl diphosphate from 1-deoxy-D-xylulose 5-phosphate: step 4/6. Its function is as follows. Involved in the biosynthesis of isopentenyl diphosphate (IPP) and dimethylallyl diphosphate (DMAPP), two major building blocks of isoprenoid compounds. Catalyzes the conversion of 4-diphosphocytidyl-2-C-methyl-D-erythritol 2-phosphate (CDP-ME2P) to 2-C-methyl-D-erythritol 2,4-cyclodiphosphate (ME-CPP) with a corresponding release of cytidine 5-monophosphate (CMP). The sequence is that of 2-C-methyl-D-erythritol 2,4-cyclodiphosphate synthase from Dehalococcoides mccartyi (strain ATCC BAA-2266 / KCTC 15142 / 195) (Dehalococcoides ethenogenes (strain 195)).